Reading from the N-terminus, the 526-residue chain is Vang-like protein 2 (526 aa).

A disordered region spans residues 1 to 95; it reads MDNESQYSGY…NEDLTRASKE (95 aa). Topologically, residues 1–109 are cytoplasmic; sequence MDNESQYSGY…SPLECRRFAG (109 aa). Residues 15–33 show a composition bias toward basic residues; it reads SHSRSSRKHRDRRDRHRSK. Basic and acidic residues-rich tracts occupy residues 34–43 and 58–68; these read SRDSSSRGDK and ESTRGDDRDDN. Low complexity predominate over residues 70 to 83; the sequence is GETTTVVTGTSEHS. Positions 84–95 are enriched in basic and acidic residues; that stretch reads VSNEDLTRASKE. Residues 110–130 form a helical membrane-spanning segment; it reads PIVSGVLGLFALLTPLAFLLL. At 131–148 the chain is on the extracellular side; the sequence is PQLLWRDSLEPCGTPCEG. A helical membrane pass occupies residues 149–169; it reads LYVSLAFKLLVLLISSWALFL. The Cytoplasmic portion of the chain corresponds to 170–178; that stretch reads RPSRSTLPR. The chain crosses the membrane as a helical span at residues 179 to 199; it reads FFVFRCLLMALVFLFVASYWL. Residues 200–215 lie on the Extracellular side of the membrane; sequence FYGVRVLEPRERDYRG. Residues 216-236 traverse the membrane as a helical segment; the sequence is IVGYAVSLVDALLFIQYLALV. Residues 237–526 lie on the Cytoplasmic side of the membrane; the sequence is LLEVRHLRPA…VMRLQSETSV (290 aa). Positions 523 to 526 match the PDZ-binding motif; it reads ETSV.

Belongs to the Vang family. As to quaternary structure, interacts with the PDZ domain of dvl2/dsh. Ubiquitously expressed at the 4-cell stage. In early somitogenesis, becomes more abundant in anterior neural tissue where expression is seen in the neural tube but not in the notochord.

It localises to the cell membrane. Functionally, plays a role in non-canonical Wnt/planar cell polarity (PCP) signaling to regulate convergent extension cell movements during gastrulation. Acts together with scrib and prickle1 and localizes prickle1 and dvl2/dsh to the plasma membrane. Has an overlapping role with kny during both convergent extension and eye development. In the eye, involved in establishing proper alignment of the anterior neural plate and midline cells expressing shha and shhb/twhh. Has indirect effects on a number of other developmental processes including notochord shape formation, neural progenitor cell morphogenesis, segregation of somites and adaxial cell development. Together with prickle1, required for the posterior (caudal) movement of branchiomotor neurons in the hindbrain independently of, and a few hours after, convergent extension. May be required for cell surface localization of fzd3 and fzd6 in the inner ear. The sequence is that of Vang-like protein 2 from Danio rerio (Zebrafish).